We begin with the raw amino-acid sequence, 884 residues long: E3 ubiquitin-protein ligase BRE1-like 1 (884 aa).

A disordered region spans residues Met1–Ser37. The stretch at Tyr49–Leu86 forms a coiled coil. The segment at Lys107–Thr127 is disordered. Over residues Ser108 to Asn121 the composition is skewed to low complexity. Coiled-coil stretches lie at residues Leu216–Leu541, Ser580–Ile663, Arg696–Asp762, and Lys789–Arg827. The RING-type zinc-finger motif lies at Cys832–Ser871.

It belongs to the BRE1 family. Interacts with SKIPA. Interacts with HUB2.

It localises to the nucleus. The enzyme catalyses S-ubiquitinyl-[E2 ubiquitin-conjugating enzyme]-L-cysteine + [acceptor protein]-L-lysine = [E2 ubiquitin-conjugating enzyme]-L-cysteine + N(6)-ubiquitinyl-[acceptor protein]-L-lysine.. The protein operates within protein modification; protein ubiquitination. Its function is as follows. E3 ubiquitin-protein ligase that monoubiquitinates H2B to form H2BK143ub1. H2BK143ub1 gives a specific tag for epigenetic transcriptional activation and is a prerequisite for H3 Lys-4 methylation (H3K4me). It thereby plays a central role in histone code and gene regulation. H2B monoubiquitination (H2BK143ub1), mediated by HUB1, modulates transcriptional regulation of anther development, likely by promoting histone H3K4 dimethylation (H3K4me2) in the chromatin of the key tapetum degradation-related genes C4, CP1 and UDT1. In Oryza sativa subsp. japonica (Rice), this protein is E3 ubiquitin-protein ligase BRE1-like 1.